The primary structure comprises 197 residues: NADH-quinone oxidoreductase subunit C (197 aa).

It belongs to the complex I 30 kDa subunit family. NDH-1 is composed of 14 different subunits. Subunits NuoB, C, D, E, F, and G constitute the peripheral sector of the complex.

It localises to the cell inner membrane. The catalysed reaction is a quinone + NADH + 5 H(+)(in) = a quinol + NAD(+) + 4 H(+)(out). NDH-1 shuttles electrons from NADH, via FMN and iron-sulfur (Fe-S) centers, to quinones in the respiratory chain. The immediate electron acceptor for the enzyme in this species is believed to be ubiquinone. Couples the redox reaction to proton translocation (for every two electrons transferred, four hydrogen ions are translocated across the cytoplasmic membrane), and thus conserves the redox energy in a proton gradient. The protein is NADH-quinone oxidoreductase subunit C of Neisseria meningitidis serogroup B (strain ATCC BAA-335 / MC58).